The primary structure comprises 291 residues: MKDYLVKALAFDGEVRAYSVRTTNMVSEAQRRHDTWRTASAALGRSLTAGAMMGAMLKGEQKLTIKVEGNGPIGPIVIDAHANGDVRGYVTNPHVDFESTEQGKLRVYQAVGTEGNVTVIKDIGMREPFIGQSPIVSGELGEDFTYYFAVSEQTPSSVGVGVLVNGDDSILAAGGFILQIMPGAQEETISFIEERLKKIPPVSTMIEKGLSPEGILNEILGEENVKVLETMDVQFNCTCSRERIESVLISLGKAELEQIRGEEEETEVHCHFCNERYKFSKDDIKQLIETL.

Disulfide bonds link Cys237–Cys239 and Cys270–Cys273.

The protein belongs to the HSP33 family. Under oxidizing conditions two disulfide bonds are formed involving the reactive cysteines. Under reducing conditions zinc is bound to the reactive cysteines and the protein is inactive.

The protein localises to the cytoplasm. Functionally, redox regulated molecular chaperone. Protects both thermally unfolding and oxidatively damaged proteins from irreversible aggregation. Plays an important role in the bacterial defense system toward oxidative stress. The chain is 33 kDa chaperonin from Bacillus cytotoxicus (strain DSM 22905 / CIP 110041 / 391-98 / NVH 391-98).